The following is a 451-amino-acid chain: Chromosomal replication initiator protein DnaA (451 aa).

The segment at 1 to 71 (MSEKEIWDKV…QAIIYDVIGY (71 aa)) is domain I, interacts with DnaA modulators. The domain II stretch occupies residues 71–112 (YEVKPHFISEDELASYNNVNTQEVQEPQVQHSSIDDKTWGKE). Positions 113 to 329 (QFNMHNTFDT…GALTRLLAYS (217 aa)) are domain III, AAA+ region. Residues Gly157, Gly159, Lys160, and Thr161 each coordinate ATP. The domain IV, binds dsDNA stretch occupies residues 330 to 451 (KLQGKPITTE…ENLEKEIRNQ (122 aa)).

The protein belongs to the DnaA family. In terms of assembly, oligomerizes as a right-handed, spiral filament on DNA at oriC.

Its subcellular location is the cytoplasm. In terms of biological role, plays an essential role in the initiation and regulation of chromosomal replication. ATP-DnaA binds to the origin of replication (oriC) to initiate formation of the DNA replication initiation complex once per cell cycle. Binds the DnaA box (a 9 base pair repeat at the origin) and separates the double-stranded (ds)DNA. Forms a right-handed helical filament on oriC DNA; dsDNA binds to the exterior of the filament while single-stranded (ss)DNA is stabiized in the filament's interior. The ATP-DnaA-oriC complex binds and stabilizes one strand of the AT-rich DNA unwinding element (DUE), permitting loading of DNA polymerase. After initiation quickly degrades to an ADP-DnaA complex that is not apt for DNA replication. Binds acidic phospholipids. In Staphylococcus epidermidis (strain ATCC 35984 / DSM 28319 / BCRC 17069 / CCUG 31568 / BM 3577 / RP62A), this protein is Chromosomal replication initiator protein DnaA.